The chain runs to 475 residues: tRNA modification GTPase MnmE (475 aa).

Arginine 24, glutamate 81, and lysine 124 together coordinate (6S)-5-formyl-5,6,7,8-tetrahydrofolate. The TrmE-type G domain occupies 220 to 397 (GLSVVLAGQP…LRRELLRLVG (178 aa)). A K(+)-binding site is contributed by asparagine 230. Residues 230–235 (NVGKSS), 249–255 (TPIAGTT), 274–277 (DTAG), and 378–380 (SAR) each bind GTP. Serine 234 is a Mg(2+) binding site. Positions 249, 251, and 254 each coordinate K(+). Threonine 255 provides a ligand contact to Mg(2+). Residue lysine 475 coordinates (6S)-5-formyl-5,6,7,8-tetrahydrofolate.

It belongs to the TRAFAC class TrmE-Era-EngA-EngB-Septin-like GTPase superfamily. TrmE GTPase family. As to quaternary structure, homodimer. Heterotetramer of two MnmE and two MnmG subunits. K(+) serves as cofactor.

The protein localises to the cytoplasm. Exhibits a very high intrinsic GTPase hydrolysis rate. Involved in the addition of a carboxymethylaminomethyl (cmnm) group at the wobble position (U34) of certain tRNAs, forming tRNA-cmnm(5)s(2)U34. The polypeptide is tRNA modification GTPase MnmE (Cupriavidus necator (strain ATCC 17699 / DSM 428 / KCTC 22496 / NCIMB 10442 / H16 / Stanier 337) (Ralstonia eutropha)).